A 364-amino-acid polypeptide reads, in one-letter code: MGSTGETQMSPAQILDEEANFALQLISSSVLPMVLKTAIELDLLEIMAKAGPGALLPPSDIASHLPTKNPNAPVMLDRILRLLASYSILICSLRDLPDGKVERLYGLASVCKFLTRNEDGVSVSPLCLMNQDKVLMESWYHLKDAILEGGIPFNKAYGMTAFEYHGTDPRFNKVFNKGMSVHSKMAMKKILETYKGFEGLASLVDVGGGTGAVVSTIVSKYPSIKGINFDLPHVIADAPAFPGVENVGGDMFVSVPKADAVFMKWICHDWSDEHCLTFLKNCYDALPENGKVILVECILPVAPDTSLATKGVMHVDVIMLAHNPGGKERTDREFESLARGAGFKGFEVMCCAFNTHVIEFRKKA.

Position 129-135 (129-135 (MNQDKVL)) interacts with substrate. Positions 161 to 179 (AFEYHGTDPRFNKVFNKGM) are substrate binding. S-adenosyl-L-methionine-binding residues include glycine 207, aspartate 230, aspartate 250, methionine 251, and lysine 264. Histidine 268 (proton acceptor) is an active-site residue.

It belongs to the class I-like SAM-binding methyltransferase superfamily. Cation-independent O-methyltransferase family. COMT subfamily. Homodimer.

It catalyses the reaction (E)-caffeate + S-adenosyl-L-methionine = (E)-ferulate + S-adenosyl-L-homocysteine + H(+). The protein operates within aromatic compound metabolism; phenylpropanoid biosynthesis. In terms of biological role, catalyzes the conversion of caffeic acid to ferulic acid and of 5-hydroxyferulic acid to sinapic acid. The resulting products may subsequently be converted to the corresponding alcohols that are incorporated into lignins. This is Caffeic acid 3-O-methyltransferase 2 (OMT2) from Populus tremuloides (Quaking aspen).